A 402-amino-acid chain; its full sequence is Serine/threonine transporter SstT (402 aa).

9 helical membrane passes run 19–39 (IGVV…AIGL), 43–63 (LFVG…VISA), 86–106 (TFAA…TLIL), 138–158 (AITE…GLAM), 179–199 (VVKW…FTSI), 212–232 (LLIL…NPII), 287–307 (IPLG…ILTL), 327–347 (VVAA…LLLI), and 354–374 (FGIS…VGVI).

Belongs to the dicarboxylate/amino acid:cation symporter (DAACS) (TC 2.A.23) family.

The protein resides in the cell membrane. It catalyses the reaction L-serine(in) + Na(+)(in) = L-serine(out) + Na(+)(out). It carries out the reaction L-threonine(in) + Na(+)(in) = L-threonine(out) + Na(+)(out). Its function is as follows. Involved in the import of serine and threonine into the cell, with the concomitant import of sodium (symport system). This chain is Serine/threonine transporter SstT, found in Streptococcus agalactiae serotype Ia (strain ATCC 27591 / A909 / CDC SS700).